A 115-amino-acid chain; its full sequence is NADH-ubiquinone oxidoreductase chain 3 (115 aa).

Transmembrane regions (helical) follow at residues 3–23 (VMLT…IAFW), 55–75 (FFLV…LLPL), and 84–104 (LTTM…SLAY).

The protein belongs to the complex I subunit 3 family. As to quaternary structure, core subunit of respiratory chain NADH dehydrogenase (Complex I) which is composed of 45 different subunits. Interacts with TMEM186. Interacts with TMEM242.

It is found in the mitochondrion inner membrane. The enzyme catalyses a ubiquinone + NADH + 5 H(+)(in) = a ubiquinol + NAD(+) + 4 H(+)(out). Core subunit of the mitochondrial membrane respiratory chain NADH dehydrogenase (Complex I) which catalyzes electron transfer from NADH through the respiratory chain, using ubiquinone as an electron acceptor. Essential for the catalytic activity of complex I. The sequence is that of NADH-ubiquinone oxidoreductase chain 3 from Canis lupus familiaris (Dog).